The sequence spans 1535 residues: Protein artichoke (1535 aa).

Residues 1 to 19 form the signal peptide; sequence MMLLPIFLLLCIGINLIRA. LRR repeat units follow at residues 64 to 87, 89 to 110, 112 to 135, 136 to 157, 158 to 181, 183 to 206, 207 to 230, 231 to 256, 257 to 280, 281 to 304, 306 to 328, 331 to 356, 357 to 380, 382 to 404, 406 to 429, 430 to 452, 453 to 476, 478 to 500, 521 to 545, 548 to 571, 573 to 595, 597 to 619, 620 to 643, 645 to 667, 669 to 691, 692 to 714, 716 to 738, 739 to 762, 764 to 786, 788 to 810, 811 to 834, 835 to 858, 860 to 882, and 883 to 906; these read KGRI…FFGS, QIVR…WLNE, ENGL…SLNG, MINM…DFSG, LLSL…LFRH, PKLQ…LFDG, LISL…ALSR, LPNL…IVKD, LEHL…SFVD, LPNL…AFLR, PQLK…SLLQ, GSGV…LLDA, LPRL…ALRG, GTLE…ALMA, PALR…FWNL, PGLK…LLAG, LPSL…SFRH, PLLE…TLIH, LPRI…ASKD, LPNL…GFQG, MELR…SFIG, QRLE…ALLP, LAEL…FFSN, SRLE…AFDT, RSLE…LGNL, NNLR…VIGG, RNVV…TFRN, LPKL…ALKG, DELQ…VFEE, PSLL…SFHN, ANSL…GLRS, MRNL…PLKA, NWLV…PFET, and MPRL…TFRN. One can recognise an LRRCT domain in the interval 919-963; the sequence is NPIDCNCEMQWLSVWLQETNFPYPGPKCQDGRLLRSARMERSLCV. Disordered regions lie at residues 1036-1055, 1253-1331, 1377-1416, and 1429-1449; these read HSAI…NSNI, TQAR…DSQY, VTTT…GRST, and AQPT…EGVA. Residues 1253 to 1270 are compositionally biased toward polar residues; sequence TQARPKPTKSSGESSETA. 2 stretches are compositionally biased toward low complexity: residues 1271-1285 and 1293-1315; these read TYEV…TTTT and TSTT…TQVT. Composition is skewed to polar residues over residues 1316–1328 and 1377–1391; these read PAEN…TELD and VTTT…NQVT. Over residues 1398–1407 the composition is skewed to pro residues; that stretch reads TVPPPPPASP.

It is found in the secreted. The protein localises to the extracellular space. It localises to the extracellular matrix. Its subcellular location is the cytoplasm. Its function is as follows. Required for normal morphology and function of ciliated sensory organs. The sequence is that of Protein artichoke from Drosophila melanogaster (Fruit fly).